The primary structure comprises 169 residues: Putative hydrolase 111R (169 aa).

The Nudix hydrolase domain occupies 46–169; that stretch reads FEKRKAGVFV…QKILMALSCN (124 aa). Positions 76 to 98 match the Nudix box motif; sequence GHMEAYDHSPKTCAERELKEETG. Mg(2+) contacts are provided by Glu92, Glu96, and Asp138.

Belongs to the Nudix hydrolase family. Requires Mg(2+) as cofactor. The cofactor is Mn(2+).

The sequence is that of Putative hydrolase 111R from Aedes vexans (Inland floodwater mosquito).